Reading from the N-terminus, the 341-residue chain is Radial spoke head 14 homolog (341 aa).

ARM repeat units follow at residues 16–55 (PTKAAIAYGCRALSKLNEELQSRDLLTRQKALVALCDLMH), 57–96 (PEYVYEAINIGCLESLKTLLQDDDNLVRIKTTEVLYIMAT), 99–138 (VGRVGFLKHDIIQALSLLLSDHQTLCRENLHQAYKHLAQL), 139–178 (PKGAQGIVQSGLIPSLVRKLQKEEDHIQEIILDTLALCLQ), 180–217 (DATEALESQAVPCLKEKLLSQNSEIRSKAARALIAISI), 219–258 (LDGKNQVWKNKVIPILVTLLSDTDEEVKANAAGALMHATV), 260–300 (TEGK…MLAE), and 302–339 (PEGRKLLLSHVPIFRYLLAHKNEAIQRAAEVAIKVIEW).

This sequence belongs to the flagellar radial spoke RSP14 family. Component of the axonemal radial spoke complex 1 (RS1), at least composed of spoke head proteins RSPH1, RSPH3, RSPH9 and the cilia-specific component RSPH4A or sperm-specific component RSPH6A, spoke stalk proteins RSPH14, DNAJB13, DYDC1, ROPN1L and NME5, and the anchor protein IQUB.

The protein localises to the cytoplasm. The protein resides in the cytoskeleton. It localises to the flagellum axoneme. Functions as part of axonemal radial spoke complexes that play an important part in the motility of sperm and cilia. This Mus musculus (Mouse) protein is Radial spoke head 14 homolog.